The following is a 396-amino-acid chain: S-adenosylmethionine synthase (396 aa).

Histidine 16 provides a ligand contact to ATP. Aspartate 18 contributes to the Mg(2+) binding site. Glutamate 44 is a K(+) binding site. L-methionine contacts are provided by glutamate 57 and glutamine 100. Positions glutamine 100–arginine 110 are flexible loop. ATP-binding positions include aspartate 167–lysine 169, arginine 233–phenylalanine 234, aspartate 242, arginine 248–lysine 249, alanine 265, and lysine 269. Aspartate 242 contributes to the L-methionine binding site. Lysine 273 is a binding site for L-methionine.

The protein belongs to the AdoMet synthase family. In terms of assembly, homotetramer; dimer of dimers. It depends on Mg(2+) as a cofactor. K(+) is required as a cofactor.

The protein resides in the cytoplasm. It carries out the reaction L-methionine + ATP + H2O = S-adenosyl-L-methionine + phosphate + diphosphate. Its pathway is amino-acid biosynthesis; S-adenosyl-L-methionine biosynthesis; S-adenosyl-L-methionine from L-methionine: step 1/1. Its function is as follows. Catalyzes the formation of S-adenosylmethionine (AdoMet) from methionine and ATP. The overall synthetic reaction is composed of two sequential steps, AdoMet formation and the subsequent tripolyphosphate hydrolysis which occurs prior to release of AdoMet from the enzyme. The polypeptide is S-adenosylmethionine synthase (Paraburkholderia phytofirmans (strain DSM 17436 / LMG 22146 / PsJN) (Burkholderia phytofirmans)).